The following is a 708-amino-acid chain: Ubiquitin thioesterase ZRANB1 (708 aa).

The segment at 3–33 adopts a RanBP2-type 1 zinc-finger fold; the sequence is ERGIKWACEYCTYENWPSAIKCTMCRAQRPS. Residues Cys10, Cys13, Cys24, and Cys27 each coordinate Zn(2+). A disordered region spans residues 38–73; it reads TEDPFKSGSSDVGRDWDPSSTEGGSSPLICPDSSAR. 2 consecutive RanBP2-type zinc fingers follow at residues 84–113 and 149–178; these read NANK…QRRT and RTQH…PRPN. Zn(2+) is bound by residues Cys90, Cys93, Cys104, Cys107, Cys155, Cys158, Cys169, and Cys172. Residues 200 to 225 are disordered; it reads RARWRGSCSSGNSQRRSPPATKRDSE. A compositionally biased stretch (polar residues) spans 206 to 215; sequence SCSSGNSQRR. 2 ANK repeats span residues 260-290 and 313-340; these read KKTD…SGGD and YTLV…QQAA. A TRAF-binding region spans residues 392-641; the sequence is PTVQEKLFDE…LSAQELGNEE (250 aa). In terms of domain architecture, OTU spans 432-592; that stretch reads LYALWNRTAG…RGHFSALVAM (161 aa). Cys443 acts as the Nucleophile in catalysis. His585 (proton acceptor) is an active-site residue.

This sequence belongs to the peptidase C64 family. Interacts with TRAF6. Interacts with APC. As to expression, widely expressed.

It is found in the cytoplasm. It localises to the nucleus. It carries out the reaction Thiol-dependent hydrolysis of ester, thioester, amide, peptide and isopeptide bonds formed by the C-terminal Gly of ubiquitin (a 76-residue protein attached to proteins as an intracellular targeting signal).. In terms of biological role, ubiquitin thioesterase, which specifically hydrolyzes 'Lys-29'-linked and 'Lys-33'-linked diubiquitin. Also cleaves 'Lys-63'-linked chains, but with 40-fold less efficiency compared to 'Lys-29'-linked ones. Positive regulator of the Wnt signaling pathway that deubiquitinates APC protein, a negative regulator of Wnt-mediated transcription. Acts as a regulator of autophagy by mediating deubiquitination of PIK3C3/VPS34, thereby promoting autophagosome maturation. Plays a role in the regulation of cell morphology and cytoskeletal organization. Required in the stress fiber dynamics and cell migration. This Homo sapiens (Human) protein is Ubiquitin thioesterase ZRANB1.